A 233-amino-acid chain; its full sequence is Protein DEHYDRATION-INDUCED 19 homolog 2 (233 aa).

The tract at residues 176 to 215 is disordered; it reads DLHSDSSDNNFLLNKFPDDKTAERAEPSLSEKDQKERAQR. The span at 191-214 shows a compositional bias: basic and acidic residues; that stretch reads FPDDKTAERAEPSLSEKDQKERAQ.

It belongs to the Di19 family.

This Oryza sativa subsp. japonica (Rice) protein is Protein DEHYDRATION-INDUCED 19 homolog 2 (DI19-2).